The chain runs to 567 residues: uncharacterized protein (567 aa).

Belongs to the protein kinase superfamily. ADCK protein kinase family.

This is an uncharacterized protein from Synechocystis sp. (strain ATCC 27184 / PCC 6803 / Kazusa).